The sequence spans 718 residues: Phospholipid phosphatase-related protein type 3 (718 aa).

3 helical membrane passes run 18–38, 70–90, and 133–153; these read LPCF…SLYF, LIPL…SIMV, and FVGV…VIQL. Asn169 carries an N-linked (GlcNAc...) asparagine glycan. The next 3 helical transmembrane spans lie at 207-227, 233-253, and 263-283; these read HATL…SVIS, LKPI…LTQI, and VYAG…HAVG. The disordered stretch occupies residues 313 to 347; that stretch reads SVYQQNKSVSTDELGPPGRLEGAPRPVAREKTSLG. Over residues 314 to 323 the composition is skewed to polar residues; it reads VYQQNKSVST. A glycan (N-linked (GlcNAc...) asparagine) is linked at Asn318. A phosphoserine mark is found at Ser322 and Ser353. The residue at position 376 (Thr376) is a Phosphothreonine. The interval 416–488 is disordered; that stretch reads LEGRGLGLPD…GPRVILPPRA (73 aa). Phosphoserine is present on Ser428. Residues 439-462 show a composition bias toward acidic residues; that stretch reads MAEEEEEEEDEEEEEEEEEEEDEG. Ser508 is subject to Phosphoserine. A compositionally biased stretch (low complexity) spans 545 to 571; sequence APGAPGPKAAETASSSSASSDSSQYRS. The interval 545–577 is disordered; the sequence is APGAPGPKAAETASSSSASSDSSQYRSPSDRDS. Ser641 is subject to Phosphoserine. Low complexity predominate over residues 664-680; the sequence is GEGLPPLGAADGALGPG. The disordered stretch occupies residues 664–702; it reads GEGLPPLGAADGALGPGSRESTLRRHAGGLGLAEREAEA.

This sequence belongs to the PA-phosphatase related phosphoesterase family.

The protein resides in the membrane. The protein is Phospholipid phosphatase-related protein type 3 of Homo sapiens (Human).